A 296-amino-acid chain; its full sequence is Nicotinate dehydrogenase FAD-subunit (296 aa).

Residues Met-1 to Ala-179 form the FAD-binding PCMH-type domain. FAD contacts are provided by residues Ile-29 to Leu-36, Gly-101, Thr-110 to Asn-114, Asp-123, Arg-160, Met-169, and Lys-187.

In terms of assembly, heterooctamer of NDHM, NDHL, NDHS and NDHF. Dimer of heterotetramers. It depends on FAD as a cofactor.

It carries out the reaction nicotinate + NADP(+) + H2O = 6-hydroxynicotinate + NADPH + H(+). It functions in the pathway cofactor degradation; nicotinate degradation; 6-hydroxynicotinate from nicotinate: step 1/1. With respect to regulation, reversibly inactivated by selenide and sulfide. Not inhibited by cyanide. In terms of biological role, catalyzes the hydroxylation of nicotinate to 6-hydroxynicotinate. Also active against 2-pyrazinecarboxylic acid, but inactive against other nicotinate analogs. In Eubacterium barkeri (Clostridium barkeri), this protein is Nicotinate dehydrogenase FAD-subunit (ndhF).